The sequence spans 275 residues: Bis(5'-nucleosyl)-tetraphosphatase, symmetrical (275 aa).

Belongs to the Ap4A hydrolase family.

It carries out the reaction P(1),P(4)-bis(5'-adenosyl) tetraphosphate + H2O = 2 ADP + 2 H(+). Its function is as follows. Hydrolyzes diadenosine 5',5'''-P1,P4-tetraphosphate to yield ADP. This chain is Bis(5'-nucleosyl)-tetraphosphatase, symmetrical (apaH), found in Pasteurella multocida (strain Pm70).